The primary structure comprises 239 residues: Small ribosomal subunit protein uS2 (239 aa).

This sequence belongs to the universal ribosomal protein uS2 family.

This chain is Small ribosomal subunit protein uS2, found in Parasynechococcus marenigrum (strain WH8102).